A 561-amino-acid polypeptide reads, in one-letter code: Probable xyloglucan galactosyltransferase GT20 (561 aa).

Topologically, residues 1–31 (MVSKRKSRTSKTIEDSCIHLCSVFFRFLYYT) are cytoplasmic. Residues 32-52 (LPALFLFFFLLYLCLSFTTGI) traverse the membrane as a helical; Signal-anchor for type II membrane protein segment. Over 53–561 (SYNNFHMCIF…LLKKINRSVV (509 aa)) the chain is Lumenal. Asn87, Asn253, Asn277, Asn418, Asn421, and Asn557 each carry an N-linked (GlcNAc...) asparagine glycan.

This sequence belongs to the glycosyltransferase 47 family. In terms of tissue distribution, expressed in hydathodes.

It is found in the golgi apparatus membrane. Functions in xyloglucan synthesis by adding side chains to the xylosylated glucan backbone. Involved in the galactosylation of hemicellulose xyloglucan. The chain is Probable xyloglucan galactosyltransferase GT20 from Arabidopsis thaliana (Mouse-ear cress).